Consider the following 306-residue polypeptide: Sulfate adenylyltransferase subunit 2 (306 aa).

It belongs to the PAPS reductase family. CysD subfamily. Heterodimer composed of CysD, the smaller subunit, and CysN.

It carries out the reaction sulfate + ATP + H(+) = adenosine 5'-phosphosulfate + diphosphate. Its pathway is sulfur metabolism; hydrogen sulfide biosynthesis; sulfite from sulfate: step 1/3. Functionally, with CysN forms the ATP sulfurylase (ATPS) that catalyzes the adenylation of sulfate producing adenosine 5'-phosphosulfate (APS) and diphosphate, the first enzymatic step in sulfur assimilation pathway. APS synthesis involves the formation of a high-energy phosphoric-sulfuric acid anhydride bond driven by GTP hydrolysis by CysN coupled to ATP hydrolysis by CysD. The chain is Sulfate adenylyltransferase subunit 2 from Brucella anthropi (strain ATCC 49188 / DSM 6882 / CCUG 24695 / JCM 21032 / LMG 3331 / NBRC 15819 / NCTC 12168 / Alc 37) (Ochrobactrum anthropi).